The sequence spans 685 residues: MIGMNRLIFSKAFTSSCKSVGKVPFAKSITRANTRYFKPTSILQQIRFNSKSSTAPNTEANSNGSTNSQSDTKKPRPKLTSEIFKLLRLAKPESKLIFFALICLVTTSATSMALPLMIGKIIDTTKKDDDDDKDNDNDDKDDTQPSDKLIFGLPQPQFYSALGVLFIVSASTNFGRIYLLRSVGERLVARLRSRLFSKILAQDAYFFDLGPSKTGMKTGDLISRIASDTQIISKSLSMNISDGIRAIISGCVGLSMMCYVSWKLSLCMSLIFPPLITMSWFYGRKIKALSKLIQENIGDMTKVTEEKLNGVKVIQTFSQQQSVVHSYNQEIKNIFNSSMREAKLAGFFYSTNGFIGNVTMIGLLIMGTKLIGAGELTVGDLSSFMMYAVYTGTSVFGLGNFYTELMKGIGAAERVFELVEYQPRISNHLGKKVDELNGDIEFKGIDFTYPSRPESGIFKDLNLHIKQGENVCLVGPSGSGKSTVSQLLLRFYDPEKGTIQIGDDVITDLNLNHYRSKLGYVQQEPLLFSGTIKENILFGKEDATDEEINNALNLSYASNFVRHLPDGLDTKIGASNSTQLSGGQKQRVSLARTLIRDPKILILDEATSALDSVSEEIVMSNLIQLNKNRGVTLISIAHRLSTIKNSDRIIVFNQDGQIVEDGKFNELHNDPNSQFNKLLKSHSLE.

Residues 48 to 70 (FNSKSSTAPNTEANSNGSTNSQS) show a composition bias toward polar residues. A disordered region spans residues 48–76 (FNSKSSTAPNTEANSNGSTNSQSDTKKPR). A glycan (N-linked (GlcNAc...) asparagine) is linked at Asn-63. The chain crosses the membrane as a helical span at residues 96-116 (LIFFALICLVTTSATSMALPL). The ABC transmembrane type-1 domain occupies 97–407 (IFFALICLVT…LGNFYTELMK (311 aa)). The disordered stretch occupies residues 125 to 147 (TKKDDDDDKDNDNDDKDDTQPSD). Residues 129–141 (DDDDKDNDNDDKD) show a composition bias toward acidic residues. The helical transmembrane segment at 158–180 (FYSALGVLFIVSASTNFGRIYLL) threads the bilayer. Asn-239 carries N-linked (GlcNAc...) asparagine glycosylation. Residues 266–282 (LCMSLIFPPLITMSWFY) form a helical membrane-spanning segment. A glycan (N-linked (GlcNAc...) asparagine) is linked at Asn-336. 2 helical membrane passes run 353–373 (GFIG…LIGA) and 381–401 (LSSF…LGNF). Residues 440-680 (IEFKGIDFTY…PNSQFNKLLK (241 aa)) enclose the ABC transporter domain. 475–482 (GPSGSGKS) lines the ATP pocket. Asn-553 and Asn-576 each carry an N-linked (GlcNAc...) asparagine glycan.

This sequence belongs to the ABC transporter superfamily. ABCB family. Mitochondrial peptide exporter (TC 3.A.1.212) subfamily.

The protein localises to the membrane. The sequence is that of ATP-dependent permease MDL1 (MDL1) from Candida albicans (Yeast).